The chain runs to 282 residues: Putative hydrolase Bcen_5340 (282 aa).

Mg(2+) contacts are provided by Glu124, Glu126, and Asp155.

This sequence belongs to the FAH family. Requires Mg(2+) as cofactor.

The polypeptide is Putative hydrolase Bcen_5340 (Burkholderia orbicola (strain AU 1054)).